The following is a 393-amino-acid chain: MTDVVIVSAARTAVGKFGGSLAKIPAPELGAVVIKAALERAGVKPEQVSEVIMGQVLTAGSGQNPARQAAIKAGLPAMVPAMTINKVCGSGLKAVMLAANAIMAGDAEIVVAGGQENMSAAPHVLPGSRDGFRMGDAKLVDTMIVDGLWDVYNQYHMGITAENVAKEYGITREAQDEFAVGSQNKAEAAQKAGKFDEEIVPVLIPQRKGDPVAFKTDEFVRQGATLDSMSGLKPAFDKAGTVTAANASGLNDGAAAVVVMSAAKAKELGLTPLATIKSYANAGVDPKVMGMGPVPASKRALSRAEWTPQDLDLMEINEAFAAQALAVHQQMGWDTSKVNVNGGAIAIGHPIGASGCRILVTLLHEMKRRDAKKGLASLCIGGGMGVALAVERK.

Cys-88 acts as the Acyl-thioester intermediate in catalysis. Active-site proton acceptor residues include His-349 and Cys-379.

It belongs to the thiolase-like superfamily. Thiolase family. As to quaternary structure, homotetramer.

It localises to the cytoplasm. The enzyme catalyses 2 acetyl-CoA = acetoacetyl-CoA + CoA. The protein operates within biopolymer metabolism; poly-(R)-3-hydroxybutanoate biosynthesis. Its activity is regulated as follows. The condensation reaction is inhibited by free CoA. The cleavage reaction is characterized by substrate inhibition by acetoacetyl-CoA, which is partially relieved by free CoA. In terms of biological role, catalyzes the condensation of two acetyl-coA units to form acetoacetyl-CoA. Is involved in the biosynthesis of polyhydroxybutyrate (PHB), which is accumulated as an intracellular energy reserve material when cells grow under conditions of nutrient limitation. Also catalyzes the reverse reaction, i.e. the cleavage of acetoacetyl-CoA, and is therefore also involved in the reutilization of PHB. The chain is Acetyl-CoA acetyltransferase from Cupriavidus necator (strain ATCC 17699 / DSM 428 / KCTC 22496 / NCIMB 10442 / H16 / Stanier 337) (Ralstonia eutropha).